A 591-amino-acid polypeptide reads, in one-letter code: MANFNVPKLGVFPVAAVFDIDNVPEDSSATGSRWLPSIYQGGNYWGGGPQALHAQVSNFDSSNRLPYNPRTENNPAGNCAFAFNPFGQYISNISSAQSVHRRIYGIDLNDEPLFSPNAASITNGGNPTMSQDTGYHNIGPINTAYKAEIFRPVNPLPMSDTAPDPETLEPGQTEPLIKSDGVYSNSGIASFIFDRPVTEPNPNWPPLPPPVIPIIYPTPALGIGAAAAYGFGYQVTVYRWEEIPVEFIADPETCPAQPTTDKVIIRTTDLNPEGSPCAYEAGIILVRQTSNPMNAVAGRLVPYVEDIAVDIFLTGKFFTLNPPLRITNNYFADDEVKENTVTIGNYTTTLSSAYYAVYKTDGYGGATCFIASGGAGISALVQLQDNSVLDVLYYSLPLSLGGSKAAIDEWVANNCGLFPMSGGLDKTTLLEIPRRQLEAINPQDGPGQYDLFILDDSGAYASFSSFIGYPEAAYYVAGAATFMDVENPDEIIFILRNGAGWYACEIGDALKIADDEFDSVDYFAYRGGVMFIGSARYTEGGDPLPIKYRAIIPGLPRGRLPRVVLEYQAVGMSFIPCQTHCLGKGGIISKV.

Cysteine 254 and cysteine 277 are disulfide-bonded.

It is found in the virion. Adsorption protein. In association with P31 and trimeric P5, forms the spike complexes located at the 5-fold vertices of the capsid. Involved in recognition and attachment to the receptor on the surface of the host. Likely triggers the processes of vertex disassembly, membrane tube formation, and subsequent DNA injection. Essential for viral infectivity. This Acinetobacter calcoaceticus (Arthrobacter siderocapsulatus) protein is Adsorption protein P2 (II).